The chain runs to 101 residues: MSRRCELTAKGVQTGHKVSHSNIKTKRRFLPNLVNVTFLSDALGRPVRLRVSTNALKSVDHRGGLDAFLAKASIAELSPKAAELKRAIAKKKAGEPAAAAS.

This sequence belongs to the bacterial ribosomal protein bL28 family.

The sequence is that of Large ribosomal subunit protein bL28 from Rhodopseudomonas palustris (strain BisB5).